Consider the following 475-residue polypeptide: Aspartyl/glutamyl-tRNA(Asn/Gln) amidotransferase subunit B (475 aa).

This sequence belongs to the GatB/GatE family. GatB subfamily. In terms of assembly, heterotrimer of A, B and C subunits.

It catalyses the reaction L-glutamyl-tRNA(Gln) + L-glutamine + ATP + H2O = L-glutaminyl-tRNA(Gln) + L-glutamate + ADP + phosphate + H(+). The catalysed reaction is L-aspartyl-tRNA(Asn) + L-glutamine + ATP + H2O = L-asparaginyl-tRNA(Asn) + L-glutamate + ADP + phosphate + 2 H(+). In terms of biological role, allows the formation of correctly charged Asn-tRNA(Asn) or Gln-tRNA(Gln) through the transamidation of misacylated Asp-tRNA(Asn) or Glu-tRNA(Gln) in organisms which lack either or both of asparaginyl-tRNA or glutaminyl-tRNA synthetases. The reaction takes place in the presence of glutamine and ATP through an activated phospho-Asp-tRNA(Asn) or phospho-Glu-tRNA(Gln). The chain is Aspartyl/glutamyl-tRNA(Asn/Gln) amidotransferase subunit B from Hydrogenovibrio crunogenus (strain DSM 25203 / XCL-2) (Thiomicrospira crunogena).